Consider the following 158-residue polypeptide: 2-C-methyl-D-erythritol 2,4-cyclodiphosphate synthase (158 aa).

Residues Asp9 and His11 each coordinate a divalent metal cation. Residues 9–11 and 35–36 contribute to the 4-CDP-2-C-methyl-D-erythritol 2-phosphate site; these read DVH and HS. A divalent metal cation is bound at residue His43. 4-CDP-2-C-methyl-D-erythritol 2-phosphate-binding positions include 57–59, 62–66, 101–107, 133–136, Phe140, and Arg143; these read DIG, FPDTD, AQKPKMA, and TTTE.

The protein belongs to the IspF family. Homotrimer. A divalent metal cation is required as a cofactor.

It catalyses the reaction 4-CDP-2-C-methyl-D-erythritol 2-phosphate = 2-C-methyl-D-erythritol 2,4-cyclic diphosphate + CMP. It functions in the pathway isoprenoid biosynthesis; isopentenyl diphosphate biosynthesis via DXP pathway; isopentenyl diphosphate from 1-deoxy-D-xylulose 5-phosphate: step 4/6. Functionally, involved in the biosynthesis of isopentenyl diphosphate (IPP) and dimethylallyl diphosphate (DMAPP), two major building blocks of isoprenoid compounds. Catalyzes the conversion of 4-diphosphocytidyl-2-C-methyl-D-erythritol 2-phosphate (CDP-ME2P) to 2-C-methyl-D-erythritol 2,4-cyclodiphosphate (ME-CPP) with a corresponding release of cytidine 5-monophosphate (CMP). The chain is 2-C-methyl-D-erythritol 2,4-cyclodiphosphate synthase from Bacillus cytotoxicus (strain DSM 22905 / CIP 110041 / 391-98 / NVH 391-98).